A 376-amino-acid polypeptide reads, in one-letter code: TraB domain-containing protein (376 aa).

An N-acetylmethionine modification is found at Met-1. At Thr-64 the chain carries Phosphothreonine.

This Mus musculus (Mouse) protein is TraB domain-containing protein (Trabd).